The following is a 172-amino-acid chain: LOB domain-containing protein 4 (172 aa).

The LOB domain occupies 12–113 (SPCAACKLLR…AQLALAQAEV (102 aa)). Residues 125-152 (PGHGLCPDSPSSSGSPSSKQVSPQDNKG) are disordered. A compositionally biased stretch (low complexity) spans 131–147 (PDSPSSSGSPSSKQVSP).

The protein belongs to the LOB domain-containing protein family. In terms of tissue distribution, expressed in young shoots, roots, stems, leaves and flowers.

In Arabidopsis thaliana (Mouse-ear cress), this protein is LOB domain-containing protein 4 (LBD4).